We begin with the raw amino-acid sequence, 177 residues long: Small ribosomal subunit protein uS13 (177 aa).

Residues 132–145 are compositionally biased toward basic residues; that stretch reads GVRHKRGQKVRGQR. Residues 132 to 177 form a disordered region; that stretch reads GVRHKRGQKVRGQRTKSTGRTEGTIGVNVEAIKEEQAEDAAAEDDE. Over residues 167 to 177 the composition is skewed to acidic residues; sequence QAEDAAAEDDE.

Belongs to the universal ribosomal protein uS13 family. As to quaternary structure, part of the 30S ribosomal subunit. Forms a loose heterodimer with protein S19. Forms two bridges to the 50S subunit in the 70S ribosome.

Functionally, located at the top of the head of the 30S subunit, it contacts several helices of the 16S rRNA. In the 70S ribosome it contacts the 23S rRNA (bridge B1a) and protein L5 of the 50S subunit (bridge B1b), connecting the 2 subunits; these bridges are implicated in subunit movement. The chain is Small ribosomal subunit protein uS13 from Haloarcula marismortui (strain ATCC 43049 / DSM 3752 / JCM 8966 / VKM B-1809) (Halobacterium marismortui).